Consider the following 171-residue polypeptide: MPNSPQNPSRKALYTEEERARRDATPWTLVQAILAPLQFLAFGVSLVLVVRFLFTGEGYEAATISILIKTLLLYTIMVTGAIWEKVVFGQYLFAPAFFWEDVFSFGVIALHTAYLWALFTGQPDNMQMFIALAAYATYVINAGQFLWKLRQARLQAASEDAGTLVMERGTR.

It participates in porphyrin-containing compound metabolism; bacteriochlorophyll biosynthesis (light-independent). This Rhodobacter capsulatus (strain ATCC BAA-309 / NBRC 16581 / SB1003) protein is 2-vinyl bacteriochlorophyllide hydratase (bchF).